Reading from the N-terminus, the 296-residue chain is 6-hydroxypseudooxynicotine dehydrogenase complex subunit alpha (296 aa).

The 177-residue stretch at M1–H177 folds into the FAD-binding PCMH-type domain. FAD contacts are provided by residues I30 to L37, T111 to S115, and E124.

As to quaternary structure, heterohexamer of 2 alpha (kdhA), 2 beta (kdhB) and 2 gamma (kdhC) subunit. Dimer of heterotrimers. FAD serves as cofactor.

The catalysed reaction is 6-hydroxypseudooxynicotine + A + H2O = 2,6-dihydroxypseudooxynicotine + AH2. It participates in alkaloid degradation; nicotine degradation. Functionally, molybdo-flavoprotein enzyme complex involved in nicotine degradation. The subunit gamma (large subunit) contains the substrate-binding sites, the subunit alpha (medium subunit) binds FAD and the subunit beta (small subunit) has a 2Fe-2S ferredoxin-type domain which binds 2 2Fe-2S clusters. This Paenarthrobacter nicotinovorans (Arthrobacter nicotinovorans) protein is 6-hydroxypseudooxynicotine dehydrogenase complex subunit alpha (kdhA).